A 630-amino-acid polypeptide reads, in one-letter code: Probable potassium transport system protein Kup 1 (630 aa).

A run of 12 helical transmembrane segments spans residues 15 to 35, 58 to 78, 104 to 124, 142 to 162, 173 to 193, 208 to 228, 252 to 272, 290 to 310, 342 to 362, 368 to 388, 399 to 419, and 424 to 444; these read LLAM…TSPL, LISL…VLFL, TAIL…DAMI, PALS…LFAV, FFGP…FMHI, AVAF…AVFL, WFTV…AFVL, ALLP…QAVI, IYLP…VFIF, LATA…VLAF, AWWA…FLGA, and IHDG…IMWT.

The protein belongs to the HAK/KUP transporter (TC 2.A.72) family.

It is found in the cell inner membrane. It catalyses the reaction K(+)(in) + H(+)(in) = K(+)(out) + H(+)(out). Its function is as follows. Transport of potassium into the cell. Likely operates as a K(+):H(+) symporter. This is Probable potassium transport system protein Kup 1 from Sinorhizobium medicae (strain WSM419) (Ensifer medicae).